Here is a 569-residue protein sequence, read N- to C-terminus: Potassium-transporting ATPase potassium-binding subunit (569 aa).

10 consecutive transmembrane segments (helical) span residues 5–25 (GWAE…PLGV), 65–85 (GYAG…YAVL), 135–155 (LVLT…AAAL), 179–199 (LYVL…LGLP), 254–274 (LTNL…FFAF), 286–306 (ALVI…YWTE), 383–403 (GIAV…LMVG), 422–442 (LLTV…AAVL), 489–509 (MGVA…AMAG), and 528–548 (GGLF…LQFF).

This sequence belongs to the KdpA family. The system is composed of three essential subunits: KdpA, KdpB and KdpC.

It is found in the cell inner membrane. Its function is as follows. Part of the high-affinity ATP-driven potassium transport (or Kdp) system, which catalyzes the hydrolysis of ATP coupled with the electrogenic transport of potassium into the cytoplasm. This subunit binds the periplasmic potassium ions and delivers the ions to the membrane domain of KdpB through an intramembrane tunnel. This is Potassium-transporting ATPase potassium-binding subunit from Caulobacter sp. (strain K31).